The sequence spans 150 residues: D-aminoacyl-tRNA deacylase (150 aa).

The short motif at 138–139 (GP) is the Gly-cisPro motif, important for rejection of L-amino acids element.

Belongs to the DTD family. In terms of assembly, homodimer.

The protein localises to the cytoplasm. It carries out the reaction glycyl-tRNA(Ala) + H2O = tRNA(Ala) + glycine + H(+). It catalyses the reaction a D-aminoacyl-tRNA + H2O = a tRNA + a D-alpha-amino acid + H(+). An aminoacyl-tRNA editing enzyme that deacylates mischarged D-aminoacyl-tRNAs. Also deacylates mischarged glycyl-tRNA(Ala), protecting cells against glycine mischarging by AlaRS. Acts via tRNA-based rather than protein-based catalysis; rejects L-amino acids rather than detecting D-amino acids in the active site. By recycling D-aminoacyl-tRNA to D-amino acids and free tRNA molecules, this enzyme counteracts the toxicity associated with the formation of D-aminoacyl-tRNA entities in vivo and helps enforce protein L-homochirality. The sequence is that of D-aminoacyl-tRNA deacylase from Chlorobaculum tepidum (strain ATCC 49652 / DSM 12025 / NBRC 103806 / TLS) (Chlorobium tepidum).